Reading from the N-terminus, the 65-residue chain is UPF0434 protein PSHAa1659 (65 aa).

It belongs to the UPF0434 family.

This is UPF0434 protein PSHAa1659 from Pseudoalteromonas translucida (strain TAC 125).